Consider the following 602-residue polypeptide: ATP-dependent DNA helicase XPD (602 aa).

Residues 1 to 247 (MQKSYGVALE…DLIEMIRSAL (247 aa)) enclose the Helicase ATP-binding domain. 11-18 (SPTGSGKT) lines the ATP pocket. The [4Fe-4S] cluster site is built by Cys74, Cys95, Cys110, and Cys146. The DEAH box signature appears at 193 to 196 (DEAH). The 182-residue stretch at 421–602 (VIEDIILKVK…SAQAREKYGA (182 aa)) folds into the Helicase C-terminal domain. Trp531 and Arg566 together coordinate ssDNA.

This sequence belongs to the helicase family. RAD3/XPD subfamily. In terms of assembly, monomer. [4Fe-4S] cluster is required as a cofactor.

The enzyme catalyses Couples ATP hydrolysis with the unwinding of duplex DNA at the replication fork by translocating in the 5'-3' direction. This creates two antiparallel DNA single strands (ssDNA). The leading ssDNA polymer is the template for DNA polymerase III holoenzyme which synthesizes a continuous strand.. The catalysed reaction is ATP + H2O = ADP + phosphate + H(+). Its function is as follows. ATP-dependent 5'-3' DNA helicase. Thought to be involved in nucleotide excision repair (NER) of DNA. The protein is ATP-dependent DNA helicase XPD of Thermoplasma acidophilum (strain ATCC 25905 / DSM 1728 / JCM 9062 / NBRC 15155 / AMRC-C165).